We begin with the raw amino-acid sequence, 363 residues long: Peptide chain release factor 1 (363 aa).

Residue Q237 is modified to N5-methylglutamine. Positions 284–296 (EDEKRRSAEESTR) are enriched in basic and acidic residues. Residues 284–305 (EDEKRRSAEESTRRSLVASGDR) are disordered.

This sequence belongs to the prokaryotic/mitochondrial release factor family. Methylated by PrmC. Methylation increases the termination efficiency of RF1.

It is found in the cytoplasm. Functionally, peptide chain release factor 1 directs the termination of translation in response to the peptide chain termination codons UAG and UAA. This Shewanella sp. (strain MR-4) protein is Peptide chain release factor 1.